The primary structure comprises 82 residues: Small ribosomal subunit protein bS16 (82 aa).

This sequence belongs to the bacterial ribosomal protein bS16 family.

The sequence is that of Small ribosomal subunit protein bS16 from Francisella tularensis subsp. tularensis (strain FSC 198).